The following is a 245-amino-acid chain: Phosphoribosylaminoimidazole-succinocarboxamide synthase (245 aa).

It belongs to the SAICAR synthetase family.

It catalyses the reaction 5-amino-1-(5-phospho-D-ribosyl)imidazole-4-carboxylate + L-aspartate + ATP = (2S)-2-[5-amino-1-(5-phospho-beta-D-ribosyl)imidazole-4-carboxamido]succinate + ADP + phosphate + 2 H(+). The protein operates within purine metabolism; IMP biosynthesis via de novo pathway; 5-amino-1-(5-phospho-D-ribosyl)imidazole-4-carboxamide from 5-amino-1-(5-phospho-D-ribosyl)imidazole-4-carboxylate: step 1/2. In Nostoc punctiforme (strain ATCC 29133 / PCC 73102), this protein is Phosphoribosylaminoimidazole-succinocarboxamide synthase.